Consider the following 502-residue polypeptide: Nostrin (502 aa).

Residues methionine 1–aspartate 260 form the F-BAR domain. Serine 114 is subject to Phosphoserine. Coiled-coil stretches lie at residues serine 160 to tyrosine 230 and lysine 305 to serine 335. One can recognise an REM-1 domain in the interval proline 292 to aspartate 372. The tract at residues lysine 413–glutamine 437 is disordered. The span at glutamine 423–glutamine 437 shows a compositional bias: low complexity. Residues glycine 438–proline 497 form the SH3 domain. Serine 479 is modified (phosphoserine).

Homotrimer. Interacts with DAB2. Interacts with NOS3, WASL and CAV1. Interacts (via SH3 domain) with DNM2; this interaction allows the recruitment of NOS3 to dynamin-positive structures. Over-expressed in brain microcapillaries from spontaneously hypertensive rats.

The protein localises to the cell membrane. The protein resides in the cytoplasmic vesicle. It localises to the cytoplasm. Its subcellular location is the cytoskeleton. It is found in the nucleus. Its function is as follows. Multivalent adapter protein which may decrease NOS3 activity by inducing its translocation away from the plasma membrane. In Rattus norvegicus (Rat), this protein is Nostrin.